Reading from the N-terminus, the 313-residue chain is MSGGLSHVPVLREEAVAMLAPRADGVYLDGTFGGGGYSASMLEAASCTVWAIDRDPAAIARGAALAARYPDRLHLIEGRFGDLLALLRDRGVTALDGAVFDFGVSSYQLDDPSRGFSFRTDGPLDMRMGAAGPTAADIVNGYAEAELADILFHFGEERASRRIAAAIVRRRAAQPFETTADLAAVIRTVVRPDRSGIDPATRSFQALRIEVNQELAEIERALEAAASLLAPGGRLVAVSFHSLEDRIVKRFMNAATGHVAAPSRHDPSGLARQAAAPRFRALTRGVVTPGEAETVANPRARSARLRGIERLAA.

Residues 35-37, Asp53, Phe80, Asp101, and Gln108 contribute to the S-adenosyl-L-methionine site; that span reads GGY.

The protein belongs to the methyltransferase superfamily. RsmH family.

Its subcellular location is the cytoplasm. The enzyme catalyses cytidine(1402) in 16S rRNA + S-adenosyl-L-methionine = N(4)-methylcytidine(1402) in 16S rRNA + S-adenosyl-L-homocysteine + H(+). Functionally, specifically methylates the N4 position of cytidine in position 1402 (C1402) of 16S rRNA. This Acidiphilium cryptum (strain JF-5) protein is Ribosomal RNA small subunit methyltransferase H.